The sequence spans 360 residues: Photosystem II protein D1 2 (360 aa).

3 helical membrane-spanning segments follow: residues 29–46 (YIGW…AATT), 118–133 (HFLT…EWEL), and 142–156 (WICL…AATA). Residue H118 participates in chlorophyll a binding. Residue Y126 coordinates pheophytin a. The [CaMn4O5] cluster site is built by D170 and E189. A helical membrane pass occupies residues 197-218 (FHMLGVAGVFGGSLFSAMHGSL). H198 contacts chlorophyll a. A quinone-binding positions include H215 and 264–265 (SF). Residue H215 participates in Fe cation binding. Residue H272 participates in Fe cation binding. The helical transmembrane segment at 274-288 (FLAAWPVIGIWFTAL) threads the bilayer. The [CaMn4O5] cluster site is built by H332, E333, D342, and A344. A propeptide spanning residues 345–360 (AGEVAPVAISAPAING) is cleaved from the precursor.

This sequence belongs to the reaction center PufL/M/PsbA/D family. In terms of assembly, PSII is composed of 1 copy each of membrane proteins PsbA, PsbB, PsbC, PsbD, PsbE, PsbF, PsbH, PsbI, PsbJ, PsbK, PsbL, PsbM, PsbT, PsbX, PsbY, PsbZ, Psb30/Ycf12, peripheral proteins PsbO, CyanoQ (PsbQ), PsbU, PsbV and a large number of cofactors. It forms dimeric complexes. The cofactor is The D1/D2 heterodimer binds P680, chlorophylls that are the primary electron donor of PSII, and subsequent electron acceptors. It shares a non-heme iron and each subunit binds pheophytin, quinone, additional chlorophylls, carotenoids and lipids. D1 provides most of the ligands for the Mn4-Ca-O5 cluster of the oxygen-evolving complex (OEC). There is also a Cl(-1) ion associated with D1 and D2, which is required for oxygen evolution. The PSII complex binds additional chlorophylls, carotenoids and specific lipids.. Post-translationally, tyr-161 forms a radical intermediate that is referred to as redox-active TyrZ, YZ or Y-Z. In terms of processing, C-terminally processed by CtpA; processing is essential to allow assembly of the oxygen-evolving complex and thus photosynthetic growth.

The protein localises to the cellular thylakoid membrane. It carries out the reaction 2 a plastoquinone + 4 hnu + 2 H2O = 2 a plastoquinol + O2. Photosystem II (PSII) is a light-driven water:plastoquinone oxidoreductase that uses light energy to abstract electrons from H(2)O, generating O(2) and a proton gradient subsequently used for ATP formation. It consists of a core antenna complex that captures photons, and an electron transfer chain that converts photonic excitation into a charge separation. The D1/D2 (PsbA/PsbD) reaction center heterodimer binds P680, the primary electron donor of PSII as well as several subsequent electron acceptors. This Nostoc sp. (strain PCC 7120 / SAG 25.82 / UTEX 2576) protein is Photosystem II protein D1 2.